We begin with the raw amino-acid sequence, 315 residues long: Acetyl-coenzyme A carboxylase carboxyl transferase subunit alpha (315 aa).

The 258-residue stretch at 32–289 folds into the CoA carboxyltransferase C-terminal domain; the sequence is EIDMLEASLE…KEAFTKQLSE (258 aa).

Belongs to the AccA family. As to quaternary structure, acetyl-CoA carboxylase is a heterohexamer composed of biotin carboxyl carrier protein (AccB), biotin carboxylase (AccC) and two subunits each of ACCase subunit alpha (AccA) and ACCase subunit beta (AccD).

It localises to the cytoplasm. The catalysed reaction is N(6)-carboxybiotinyl-L-lysyl-[protein] + acetyl-CoA = N(6)-biotinyl-L-lysyl-[protein] + malonyl-CoA. Its pathway is lipid metabolism; malonyl-CoA biosynthesis; malonyl-CoA from acetyl-CoA: step 1/1. Its function is as follows. Component of the acetyl coenzyme A carboxylase (ACC) complex. First, biotin carboxylase catalyzes the carboxylation of biotin on its carrier protein (BCCP) and then the CO(2) group is transferred by the carboxyltransferase to acetyl-CoA to form malonyl-CoA. The chain is Acetyl-coenzyme A carboxylase carboxyl transferase subunit alpha from Staphylococcus carnosus (strain TM300).